A 143-amino-acid polypeptide reads, in one-letter code: Putative glycerol transporter Lin0368 (143 aa).

The next 4 helical transmembrane spans lie at 6–26, 27–47, 60–80, and 90–110; these read GMIG…PLAE, NYGI…MWFM, AAFV…DVFM, and LPTI…AAAI. The disordered stretch occupies residues 118–143; sequence HEAKQEKTEPGMNIKEEERLNENQLV.

It localises to the membrane. Its function is as follows. Could be involved in the glycerol uptake either via facilitated diffusion or active transport. The chain is Putative glycerol transporter Lin0368 from Listeria innocua serovar 6a (strain ATCC BAA-680 / CLIP 11262).